The following is a 256-amino-acid chain: DNA repair protein RecO (256 aa).

This sequence belongs to the RecO family.

In terms of biological role, involved in DNA repair and RecF pathway recombination. In Rhizobium etli (strain CIAT 652), this protein is DNA repair protein RecO.